Reading from the N-terminus, the 565-residue chain is Putative lipase ATG15 (565 aa).

The Cytoplasmic portion of the chain corresponds to 1–21 (MISNDYTKFSSKRRSLRYSNR). The chain crosses the membrane as a helical; Signal-anchor for type II membrane protein span at residues 22-42 (ILLLMGTILLIVVYFYSDILV). Over 43 to 565 (DKSIIMFRNE…EYTTFTKRLI (523 aa)) the chain is Lumenal. N-linked (GlcNAc...) asparagine glycosylation is present at N217. S347 serves as the catalytic Charge relay system. Positions 488-538 (KKPKKQTTSSSSEKVDTSTTKSIDRTTITTRTNEKKWHPNPKDPSTTTTDD) are disordered. Residues 493-518 (QTTSSSSEKVDTSTTKSIDRTTITTR) show a composition bias toward low complexity. Positions 519 to 528 (TNEKKWHPNP) are enriched in basic and acidic residues.

It belongs to the AB hydrolase superfamily. Lipase family. In terms of assembly, binds to both phosphatidylinositol (PI) and phosphatidylinositol 3,5-bisphosphate (PIP2).

It localises to the endosome. It is found in the multivesicular body membrane. Its subcellular location is the prevacuolar compartment membrane. It catalyses the reaction a triacylglycerol + H2O = a diacylglycerol + a fatty acid + H(+). Lipase which is essential for lysis of subvacuolar cytoplasm to vacuole targeted bodies and intravacuolar autophagic bodies. Involved in the lysis of intravacuolar multivesicular body (MVB) vesicles. The intravacuolar membrane disintegration by ATG15 is critical to life span extension. The protein is Putative lipase ATG15 (ATG15) of Vanderwaltozyma polyspora (strain ATCC 22028 / DSM 70294 / BCRC 21397 / CBS 2163 / NBRC 10782 / NRRL Y-8283 / UCD 57-17) (Kluyveromyces polysporus).